We begin with the raw amino-acid sequence, 312 residues long: Aspartate carbamoyltransferase catalytic subunit (312 aa).

Positions 62 and 63 each coordinate carbamoyl phosphate. Residue lysine 90 participates in L-aspartate binding. Carbamoyl phosphate is bound by residues arginine 112, histidine 140, and glutamine 143. The L-aspartate site is built by arginine 173 and arginine 228. Carbamoyl phosphate-binding residues include glycine 269 and proline 270.

The protein belongs to the aspartate/ornithine carbamoyltransferase superfamily. ATCase family. Heterododecamer (2C3:3R2) of six catalytic PyrB chains organized as two trimers (C3), and six regulatory PyrI chains organized as three dimers (R2).

It carries out the reaction carbamoyl phosphate + L-aspartate = N-carbamoyl-L-aspartate + phosphate + H(+). Its pathway is pyrimidine metabolism; UMP biosynthesis via de novo pathway; (S)-dihydroorotate from bicarbonate: step 2/3. Its function is as follows. Catalyzes the condensation of carbamoyl phosphate and aspartate to form carbamoyl aspartate and inorganic phosphate, the committed step in the de novo pyrimidine nucleotide biosynthesis pathway. The chain is Aspartate carbamoyltransferase catalytic subunit from Deinococcus geothermalis (strain DSM 11300 / CIP 105573 / AG-3a).